Reading from the N-terminus, the 255-residue chain is Imidazole glycerol phosphate synthase subunit HisF (255 aa).

Active-site residues include aspartate 12 and aspartate 131.

The protein belongs to the HisA/HisF family. Heterodimer of HisH and HisF.

It localises to the cytoplasm. The enzyme catalyses 5-[(5-phospho-1-deoxy-D-ribulos-1-ylimino)methylamino]-1-(5-phospho-beta-D-ribosyl)imidazole-4-carboxamide + L-glutamine = D-erythro-1-(imidazol-4-yl)glycerol 3-phosphate + 5-amino-1-(5-phospho-beta-D-ribosyl)imidazole-4-carboxamide + L-glutamate + H(+). The protein operates within amino-acid biosynthesis; L-histidine biosynthesis; L-histidine from 5-phospho-alpha-D-ribose 1-diphosphate: step 5/9. In terms of biological role, IGPS catalyzes the conversion of PRFAR and glutamine to IGP, AICAR and glutamate. The HisF subunit catalyzes the cyclization activity that produces IGP and AICAR from PRFAR using the ammonia provided by the HisH subunit. The sequence is that of Imidazole glycerol phosphate synthase subunit HisF from Sphingopyxis alaskensis (strain DSM 13593 / LMG 18877 / RB2256) (Sphingomonas alaskensis).